We begin with the raw amino-acid sequence, 161 residues long: Small ribosomal subunit protein uS9 (161 aa).

The protein belongs to the universal ribosomal protein uS9 family.

This chain is Small ribosomal subunit protein uS9, found in Rickettsia canadensis (strain McKiel).